Reading from the N-terminus, the 217-residue chain is Cytidylate kinase (217 aa).

11–19 (GPAGAGKST) provides a ligand contact to ATP.

The protein belongs to the cytidylate kinase family. Type 1 subfamily.

The protein localises to the cytoplasm. It catalyses the reaction CMP + ATP = CDP + ADP. The enzyme catalyses dCMP + ATP = dCDP + ADP. The sequence is that of Cytidylate kinase from Clostridium perfringens (strain ATCC 13124 / DSM 756 / JCM 1290 / NCIMB 6125 / NCTC 8237 / Type A).